The chain runs to 248 residues: 3-deoxy-manno-octulosonate cytidylyltransferase (248 aa).

This sequence belongs to the KdsB family.

The protein resides in the cytoplasm. The enzyme catalyses 3-deoxy-alpha-D-manno-oct-2-ulosonate + CTP = CMP-3-deoxy-beta-D-manno-octulosonate + diphosphate. It participates in nucleotide-sugar biosynthesis; CMP-3-deoxy-D-manno-octulosonate biosynthesis; CMP-3-deoxy-D-manno-octulosonate from 3-deoxy-D-manno-octulosonate and CTP: step 1/1. Its pathway is bacterial outer membrane biogenesis; lipopolysaccharide biosynthesis. Activates KDO (a required 8-carbon sugar) for incorporation into bacterial lipopolysaccharide in Gram-negative bacteria. The chain is 3-deoxy-manno-octulosonate cytidylyltransferase from Escherichia fergusonii (strain ATCC 35469 / DSM 13698 / CCUG 18766 / IAM 14443 / JCM 21226 / LMG 7866 / NBRC 102419 / NCTC 12128 / CDC 0568-73).